The chain runs to 417 residues: 3-oxoacyl-[acyl-carrier-protein] synthase 2 (417 aa).

The Ketosynthase family 3 (KS3) domain occupies 10 to 416 (FPYVVVTGIA…GHNVAIAFGR (407 aa)). Catalysis depends on for beta-ketoacyl synthase activity residues cysteine 170, histidine 311, and histidine 346.

Belongs to the thiolase-like superfamily. Beta-ketoacyl-ACP synthases family.

It is found in the cytoplasm. The catalysed reaction is an ultra-long-chain di-unsaturated fatty acyl-[ACP] + malonyl-[ACP] + H(+) = a 3-oxo-ultra-long-chain di-unsaturated fatty acyl-[ACP] + holo-[ACP] + CO2. The protein operates within lipid metabolism; mycolic acid biosynthesis. In terms of biological role, part of the mycobacterial fatty acid elongation system FAS-II, which is involved in mycolic acid biosynthesis. Catalyzes the elongation of long chain acyl-ACP substrates by the addition of two carbons from malonyl-ACP to an acyl acceptor. Involved in extension of the mycolate chains to full lengths and produces longer chain multiunsaturated hydrocarbons averaging 54 carbons in length. This is 3-oxoacyl-[acyl-carrier-protein] synthase 2 (kasB) from Mycobacterium bovis (strain ATCC BAA-935 / AF2122/97).